The following is a 215-amino-acid chain: MKLILLILTAYLLGSIPTGLWIGQYFYNINLREHGSGNTGTTNTFRILGLKAGAATLLIDIFKGTLATLLPVLVGASNVSPIAIGFFAVLGHTFPIFAGFKGGKAVATSAGVLLGFAPLYLLFLAAVFVLTLYLFSMISLASLTASVVAVISVLTFPAAHFLLPGYDWLLTITIVVLAAIIILRHQDNMKRIKQQSENLIPWGLNLSKQQPTNHH.

6 helical membrane-spanning segments follow: residues 3–23, 42–61, 68–90, 110–130, 134–154, and 162–182; these read LILL…LWIG, TNTF…LIDI, TLLP…FAVL, AGVL…VFVL, LFSM…ISVL, and LLPG…AIII.

Belongs to the PlsY family. Probably interacts with PlsX.

Its subcellular location is the cell membrane. It catalyses the reaction an acyl phosphate + sn-glycerol 3-phosphate = a 1-acyl-sn-glycero-3-phosphate + phosphate. Its pathway is lipid metabolism; phospholipid metabolism. In terms of biological role, catalyzes the transfer of an acyl group from acyl-phosphate (acyl-PO(4)) to glycerol-3-phosphate (G3P) to form lysophosphatidic acid (LPA). This enzyme utilizes acyl-phosphate as fatty acyl donor, but not acyl-CoA or acyl-ACP. The protein is Glycerol-3-phosphate acyltransferase of Streptococcus equi subsp. zooepidemicus (strain H70).